The chain runs to 371 residues: Putative glutamate--cysteine ligase 2 (371 aa).

This sequence belongs to the glutamate--cysteine ligase type 2 family. YbdK subfamily.

It catalyses the reaction L-cysteine + L-glutamate + ATP = gamma-L-glutamyl-L-cysteine + ADP + phosphate + H(+). In terms of biological role, ATP-dependent carboxylate-amine ligase which exhibits weak glutamate--cysteine ligase activity. The sequence is that of Putative glutamate--cysteine ligase 2 from Cupriavidus pinatubonensis (strain JMP 134 / LMG 1197) (Cupriavidus necator (strain JMP 134)).